We begin with the raw amino-acid sequence, 407 residues long: Phosphopentomutase (407 aa).

The Mn(2+) site is built by D10, D306, H311, D347, H348, and H359.

It belongs to the phosphopentomutase family. Mn(2+) is required as a cofactor.

It localises to the cytoplasm. It catalyses the reaction 2-deoxy-alpha-D-ribose 1-phosphate = 2-deoxy-D-ribose 5-phosphate. The enzyme catalyses alpha-D-ribose 1-phosphate = D-ribose 5-phosphate. It participates in carbohydrate degradation; 2-deoxy-D-ribose 1-phosphate degradation; D-glyceraldehyde 3-phosphate and acetaldehyde from 2-deoxy-alpha-D-ribose 1-phosphate: step 1/2. Isomerase that catalyzes the conversion of deoxy-ribose 1-phosphate (dRib-1-P) and ribose 1-phosphate (Rib-1-P) to deoxy-ribose 5-phosphate (dRib-5-P) and ribose 5-phosphate (Rib-5-P), respectively. This is Phosphopentomutase from Erwinia tasmaniensis (strain DSM 17950 / CFBP 7177 / CIP 109463 / NCPPB 4357 / Et1/99).